The sequence spans 859 residues: Bifunctional levopimaradiene synthase, chloroplastic (859 aa).

Residues 1-52 (MALLSSSLSSHIPTGAHHLTLNAYANTQCIPHFFSTLNAGTSAGKRSSLYLR) constitute a chloroplast transit peptide. 6 residues coordinate Mg(2+): D392, D394, D611, D615, N755, and E763. The DXDD motif motif lies at 392–395 (DIDD). The short motif at 611-615 (DDLYD) is the DDXXD motif element.

It belongs to the terpene synthase family. Tpsd subfamily. Requires Mg(2+) as cofactor. Mn(2+) serves as cofactor.

It is found in the plastid. Its subcellular location is the chloroplast. It carries out the reaction (+)-copalyl diphosphate = abieta-8(14),12-diene + diphosphate. It catalyses the reaction (+)-copalyl diphosphate = abieta-7,13-diene + diphosphate. The protein operates within secondary metabolite biosynthesis; terpenoid biosynthesis. It participates in terpene metabolism; oleoresin biosynthesis. In terms of biological role, terpene synthase (di-TPS) involved in the biosynthesis of diterpene natural products included in conifer oleoresin secretions and volatile emissions; these compounds contribute to biotic and abiotic stress defense against herbivores and pathogens. Catalyzes the conversion of (+)-copalyl diphosphate ((+)-CPP) to isopimaradiene. This is Bifunctional levopimaradiene synthase, chloroplastic from Picea sitchensis (Sitka spruce).